Here is a 584-residue protein sequence, read N- to C-terminus: Mitochondrial sodium/calcium exchanger protein (584 aa).

An N-terminal signal peptide occupies residues 1 to 26; that stretch reads MAGRRLNLRWALSVLCVLLMAETVSG. Topologically, residues 27–95 are extracellular; it reads TRGSSTGAHI…GIFCHFPPSL (69 aa). Asparagine 60 is a glycosylation site (N-linked (GlcNAc...) asparagine). A helical transmembrane segment spans residues 96–116; sequence LPLAVTLYVSWLLYLFLILGV. At 117 to 140 the chain is on the cytoplasmic side; sequence TAAKFFCPNLSAISTTLKLSHNVA. Residues 141 to 161 traverse the membrane as a helical segment; sequence GVTFLAFGNGAPDIFSALVAF. Residues 162 to 168 lie on the Extracellular side of the membrane; that stretch reads SDPHTAG. Residues 169–189 form a helical membrane-spanning segment; the sequence is LALGALFGAGVLVTTVVAGGI. Residues 190–200 lie on the Cytoplasmic side of the membrane; it reads TILHPFMAASR. Residues 201-221 form a helical membrane-spanning segment; sequence PFFRDIVFYMVAVFLTFLMLF. Residues 222–226 are Extracellular-facing; that stretch reads RGRVT. The chain crosses the membrane as a helical span at residues 227-247; that stretch reads LAWALGYLGLYVFYVVTVILC. The Cytoplasmic portion of the chain corresponds to 248 to 325; that stretch reads TWIYQRQRRG…KWRRKSAYWK (78 aa). Serine 258 carries the post-translational modification Phosphoserine; by PKA. A helical transmembrane segment spans residues 326–346; it reads ALKVFKLPVEFLLLLTVPVVD. Residues 347-360 lie on the Extracellular side of the membrane; it reads PDKDDQNWKRPLNC. The chain crosses the membrane as a helical span at residues 361–381; the sequence is LHLVISPLVVVLTLQSGTYGV. At 382-383 the chain is on the cytoplasmic side; it reads YE. The helical transmembrane segment at 384 to 404 threads the bilayer; that stretch reads IGGLVPVWVVVVIAGTALASV. At 405-416 the chain is on the extracellular side; sequence TFFATSDSQPPR. Residues 417 to 437 traverse the membrane as a helical segment; the sequence is LHWLFAFLGFLTSALWINAAA. Residues 438-445 lie on the Cytoplasmic side of the membrane; the sequence is TEVVNILR. A helical membrane pass occupies residues 446-466; it reads SLGVVFRLSNTVLGLTLLAWG. Over 467 to 487 the chain is Extracellular; sequence NSIGDAFSDFTLARQGYPRMA. A helical transmembrane segment spans residues 488–508; the sequence is FSACFGGIIFNILVGVGLGCL. Topologically, residues 509 to 524 are cytoplasmic; the sequence is LQISRSHTEVKLEPDG. A helical membrane pass occupies residues 525–545; the sequence is LLVWVLAGALGLSLVFSLVSV. The Extracellular portion of the chain corresponds to 546–558; it reads PLQCFQLSRVYGF. Residues 559-579 traverse the membrane as a helical segment; that stretch reads CLLLFYLNFLVVALLTEFGVI. At 580–584 the chain is on the cytoplasmic side; the sequence is HLKSM.

Belongs to the Ca(2+):cation antiporter (CaCA) (TC 2.A.19) family. SLC24A subfamily. In terms of processing, phosphorylation at Ser-258 by PKA prevents calcium overload. Present in pancreatic beta-cells (at protein level).

It localises to the mitochondrion inner membrane. The enzyme catalyses Ca(2+)(in) + 3 Na(+)(out) = Ca(2+)(out) + 3 Na(+)(in). The catalysed reaction is 3 Li(+)(out) + Ca(2+)(in) = 3 Li(+)(in) + Ca(2+)(out). With respect to regulation, inhibited by the sodium/calcium exchanger inhibitor CGP-37157. Strongly inhibited by zinc. In terms of biological role, mitochondrial sodium/calcium antiporter that mediates sodium-dependent calcium efflux from mitochondrion, by mediating the exchange of 3 sodium ions per 1 calcium ion. Plays a central role in mitochondrial calcium homeostasis by mediating mitochondrial calcium extrusion: calcium efflux is essential for mitochondrial function and cell survival, notably in cardiomyocytes. Regulates rates of glucose-dependent insulin secretion in pancreatic beta-cells during the first phase of insulin secretion: acts by mediating efflux of calcium from mitochondrion, thereby affecting cytoplasmic calcium responses. Required for store-operated Ca(2+) entry (SOCE) and Ca(2+) release-activated Ca(2+) (CRAC) channel regulation: sodium transport by SLC8B1 leads to promote calcium-shuttling that modulates mitochondrial redox status, thereby regulating SOCE activity. Involved in B-lymphocyte chemotaxis. Able to transport Ca(2+) in exchange of either Li(+) or Na(+), explaining how Li(+) catalyzes Ca(2+) exchange. In contrast to other members of the family its function is independent of K(+). The polypeptide is Mitochondrial sodium/calcium exchanger protein (Homo sapiens (Human)).